Consider the following 105-residue polypeptide: Large ribosomal subunit protein uL24 (105 aa).

Positions 77–93 (DGKPTRVGYRKDDETGK) are enriched in basic and acidic residues. The interval 77-105 (DGKPTRVGYRKDDETGKNVRIAKSNGKDL) is disordered.

This sequence belongs to the universal ribosomal protein uL24 family. As to quaternary structure, part of the 50S ribosomal subunit.

Its function is as follows. One of two assembly initiator proteins, it binds directly to the 5'-end of the 23S rRNA, where it nucleates assembly of the 50S subunit. In terms of biological role, one of the proteins that surrounds the polypeptide exit tunnel on the outside of the subunit. The protein is Large ribosomal subunit protein uL24 of Mycolicibacterium gilvum (strain PYR-GCK) (Mycobacterium gilvum (strain PYR-GCK)).